The primary structure comprises 412 residues: Argininosuccinate synthase (412 aa).

ATP is bound by residues 10–18 (AYSGGLDTS) and Ala-36. Tyr-87 and Ser-92 together coordinate L-citrulline. 115–123 (SHGATGKGN) contacts ATP. 3 residues coordinate L-aspartate: Thr-119, Asn-123, and Asp-124. Asn-123 serves as a coordination point for L-citrulline. Positions 127, 180, 189, 270, and 282 each coordinate L-citrulline.

It belongs to the argininosuccinate synthase family. As to quaternary structure, homotetramer.

The catalysed reaction is L-citrulline + L-aspartate + ATP = 2-(N(omega)-L-arginino)succinate + AMP + diphosphate + H(+). It functions in the pathway amino-acid biosynthesis; L-arginine biosynthesis; L-arginine from L-ornithine and carbamoyl phosphate: step 2/3. It participates in nitrogen metabolism; urea cycle; (N(omega)-L-arginino)succinate from L-aspartate and L-citrulline: step 1/1. The polypeptide is Argininosuccinate synthase (Aedes aegypti (Yellowfever mosquito)).